Here is a 366-residue protein sequence, read N- to C-terminus: tRNA/tmRNA (uracil-C(5))-methyltransferase (366 aa).

Residues Q190, Y218, N223, E239, and D299 each coordinate S-adenosyl-L-methionine. C324 serves as the catalytic Nucleophile. E358 functions as the Proton acceptor in the catalytic mechanism.

It belongs to the class I-like SAM-binding methyltransferase superfamily. RNA M5U methyltransferase family. TrmA subfamily.

The catalysed reaction is uridine(54) in tRNA + S-adenosyl-L-methionine = 5-methyluridine(54) in tRNA + S-adenosyl-L-homocysteine + H(+). The enzyme catalyses uridine(341) in tmRNA + S-adenosyl-L-methionine = 5-methyluridine(341) in tmRNA + S-adenosyl-L-homocysteine + H(+). In terms of biological role, dual-specificity methyltransferase that catalyzes the formation of 5-methyluridine at position 54 (m5U54) in all tRNAs, and that of position 341 (m5U341) in tmRNA (transfer-mRNA). The chain is tRNA/tmRNA (uracil-C(5))-methyltransferase from Edwardsiella ictaluri (strain 93-146).